We begin with the raw amino-acid sequence, 416 residues long: Phosphoribosylamine--glycine ligase (416 aa).

Positions 107 to 303 (KDVMACAGVP…LAGLLMAAAT (197 aa)) constitute an ATP-grasp domain. Residue 133–184 (LAAFGAPYVVKDDGLAAGKGVVVTDDVEAARAHANACDRVVVEEFLDGPEVS) coordinates ATP. The Mg(2+) site is built by Glu273 and Asn275.

This sequence belongs to the GARS family. Mg(2+) is required as a cofactor. Requires Mn(2+) as cofactor.

The catalysed reaction is 5-phospho-beta-D-ribosylamine + glycine + ATP = N(1)-(5-phospho-beta-D-ribosyl)glycinamide + ADP + phosphate + H(+). It participates in purine metabolism; IMP biosynthesis via de novo pathway; N(1)-(5-phospho-D-ribosyl)glycinamide from 5-phospho-alpha-D-ribose 1-diphosphate: step 2/2. The chain is Phosphoribosylamine--glycine ligase from Streptomyces coelicolor (strain ATCC BAA-471 / A3(2) / M145).